Here is a 278-residue protein sequence, read N- to C-terminus: Putative transposase for insertion sequence element IS986/IS6110 (278 aa).

The Integrase catalytic domain maps to 101-268 (GPPAPNRLWV…VPPVELEAAY (168 aa)).

Its function is as follows. Involved in the transposition of the insertion sequence. This chain is Putative transposase for insertion sequence element IS986/IS6110, found in Mycobacterium bovis (strain ATCC BAA-935 / AF2122/97).